The primary structure comprises 179 residues: Large ribosomal subunit protein uL5 (179 aa).

This sequence belongs to the universal ribosomal protein uL5 family. In terms of assembly, part of the 50S ribosomal subunit; part of the 5S rRNA/L5/L18/L25 subcomplex. Contacts the 5S rRNA and the P site tRNA. Forms a bridge to the 30S subunit in the 70S ribosome.

In terms of biological role, this is one of the proteins that bind and probably mediate the attachment of the 5S RNA into the large ribosomal subunit, where it forms part of the central protuberance. In the 70S ribosome it contacts protein S13 of the 30S subunit (bridge B1b), connecting the 2 subunits; this bridge is implicated in subunit movement. Contacts the P site tRNA; the 5S rRNA and some of its associated proteins might help stabilize positioning of ribosome-bound tRNAs. In Salmonella agona (strain SL483), this protein is Large ribosomal subunit protein uL5.